The chain runs to 597 residues: NADH-quinone oxidoreductase subunit C/D (597 aa).

Residues 1–188 are NADH dehydrogenase I subunit C; it reads MKKEIKRDDV…DPYVLNKYKE (188 aa). The segment at 211–597 is NADH dehydrogenase I subunit D; the sequence is KYMFLNLGPN…IDFVMSDVDR (387 aa).

It in the N-terminal section; belongs to the complex I 30 kDa subunit family. The protein in the C-terminal section; belongs to the complex I 49 kDa subunit family. In terms of assembly, NDH-1 is composed of 13 different subunits. Subunits NuoB, CD, E, F, and G constitute the peripheral sector of the complex.

It is found in the cell inner membrane. It carries out the reaction a quinone + NADH + 5 H(+)(in) = a quinol + NAD(+) + 4 H(+)(out). NDH-1 shuttles electrons from NADH, via FMN and iron-sulfur (Fe-S) centers, to quinones in the respiratory chain. The immediate electron acceptor for the enzyme in this species is believed to be ubiquinone. Couples the redox reaction to proton translocation (for every two electrons transferred, four hydrogen ions are translocated across the cytoplasmic membrane), and thus conserves the redox energy in a proton gradient. In Buchnera aphidicola subsp. Baizongia pistaciae (strain Bp), this protein is NADH-quinone oxidoreductase subunit C/D.